A 930-amino-acid polypeptide reads, in one-letter code: Polypeptide N-acetylgalactosaminyltransferase 5 (930 aa).

Residues 1-12 are Cytoplasmic-facing; the sequence is MNKIRKFFRGSG. The helical; Signal-anchor for type II membrane protein transmembrane segment at 13–35 threads the bilayer; it reads RVLAFIFVASVIWLLFDMAALRL. Over 36–930 the chain is Lumenal; sequence SFSEINTGIL…KWKFEKYYDV (895 aa). Positions 163 to 210 are disordered; it reads GSEKDSFTVSRGVPLNKTAEHTETLDKKQEAPENYNLSSDTSKQASQR. N-linked (GlcNAc...) asparagine glycosylation is present at N178. Basic and acidic residues predominate over residues 180–193; sequence TAEHTETLDKKQEA. The span at 197-210 shows a compositional bias: polar residues; it reads YNLSSDTSKQASQR. N198 and N213 each carry an N-linked (GlcNAc...) asparagine glycan. S285 carries the phosphoserine modification. 2 N-linked (GlcNAc...) asparagine glycosylation sites follow: N287 and N309. Residues 344 to 377 form a disordered region; sequence LGESQGKHIPRSQSQTLSSPLAPKRAVSQSKPTL. N387 and N403 each carry an N-linked (GlcNAc...) asparagine glycan. Intrachain disulfides connect C476-C708, C699-C779, and C812-C825. The interval 485–594 is catalytic subdomain A; it reads LPTTSIIMCF…VGWLEPLLER (110 aa). Residues D526 and R555 each coordinate substrate. N568 carries N-linked (GlcNAc...) asparagine glycosylation. Residue D578 participates in Mn(2+) binding. Substrate is bound at residue S579. H580 provides a ligand contact to Mn(2+). Positions 654–716 are catalytic subdomain B; that stretch reads IIRCPVMAGG…PCSRVGHIFR (63 aa). W685 contacts substrate. H713 provides a ligand contact to Mn(2+). The substrate site is built by R716 and Y721. Residues N766, N817, and N835 are each glycosylated (N-linked (GlcNAc...) asparagine). In terms of domain architecture, Ricin B-type lectin spans 794 to 925; sequence KAPVVRASGV…TEPQQKWKFE (132 aa). 2 cysteine pairs are disulfide-bonded: C848–C863 and C898–C913. A glycan (N-linked (GlcNAc...) asparagine) is linked at N902.

This sequence belongs to the glycosyltransferase 2 family. GalNAc-T subfamily. In terms of assembly, interacts with EXT2. Does not interact with EXT1, EXTL1 or EXTL3. Mn(2+) serves as cofactor. In terms of tissue distribution, predominantly expressed in sublingual gland. Expressed at lower level in stomach and small intestine. Weakly or not expressed in submandibular gland, parotid gland, kidney, liver, heart, brain, spleen, lung, skeletal muscle, testis, ovary, cervix and uterus.

The protein localises to the golgi apparatus membrane. The catalysed reaction is L-seryl-[protein] + UDP-N-acetyl-alpha-D-galactosamine = a 3-O-[N-acetyl-alpha-D-galactosaminyl]-L-seryl-[protein] + UDP + H(+). It carries out the reaction L-threonyl-[protein] + UDP-N-acetyl-alpha-D-galactosamine = a 3-O-[N-acetyl-alpha-D-galactosaminyl]-L-threonyl-[protein] + UDP + H(+). Its pathway is protein modification; protein glycosylation. Its function is as follows. Catalyzes the initial reaction in O-linked oligosaccharide biosynthesis, the transfer of an N-acetyl-D-galactosamine residue to a serine or threonine residue on the protein receptor. Has activity toward EA2 peptide substrate, but has a weak activity toward Muc2, Muc1b, rMuc-2 or mG-Muc substrates. The polypeptide is Polypeptide N-acetylgalactosaminyltransferase 5 (Galnt5) (Rattus norvegicus (Rat)).